The following is a 399-amino-acid chain: Putative gustatory receptor 59e (399 aa).

Residues 1 to 33 lie on the Cytoplasmic side of the membrane; it reads MDSSYWENLLLTINRFLGVYPSGRVGVLRWLHT. Residues 34 to 54 form a helical membrane-spanning segment; that stretch reads LWSLFLLMYIWTGSIVKCLEF. Residues 55–65 lie on the Extracellular side of the membrane; the sequence is TVEIPTIEKLL. Residues 66–86 traverse the membrane as a helical segment; the sequence is YLMEFPGNMATIAILVYYAVL. Residues 87-120 lie on the Cytoplasmic side of the membrane; the sequence is NRPLAHGAELQIERIITGLKGKAKRLVYKRHGQR. The helical transmembrane segment at 121–141 threads the bilayer; it reads TLHLMATTLVFHGLCVLVDVV. Residues 142–206 are Extracellular-facing; the sequence is NYDFEFWTTW…RPPQGSTKLD (65 aa). Residues 207 to 227 traverse the membrane as a helical segment; sequence ACYESAFAVLVDAGGGSALMI. Residues 228–250 lie on the Cytoplasmic side of the membrane; that stretch reads EEMRYTCNLIEQVHSQFLLRFGL. A helical membrane pass occupies residues 251–271; that stretch reads YLVLNLLNSLVSICVELYLIF. The Extracellular portion of the chain corresponds to 272 to 282; the sequence is NFFETPLWEES. A helical membrane pass occupies residues 283-303; sequence VLLVYRLLWLAMHGGRIWFIL. Residues 304–361 lie on the Cytoplasmic side of the membrane; the sequence is SVNEQILEQKCNLCQLLNELEVCSSRLQRTINRFLLQLQRSIDQPLEACGIVTLDTRS. The chain crosses the membrane as a helical span at residues 362–382; that stretch reads LGGFIGVLMAIVIFLIQIGLG. Asn383 and Asn392 each carry an N-linked (GlcNAc...) asparagine glycan. Residues 383-399 are Extracellular-facing; sequence NKSLMGVALNRSNWVYV.

It belongs to the insect chemoreceptor superfamily. Gustatory receptor (GR) family. Gr10a subfamily. In terms of tissue distribution, expressed in the adult labellar chemosensory neurons. In larvae, is expressed in neurons of the terminal external chemosensory organ.

The protein resides in the cell membrane. Functionally, probable gustatory receptor which mediates acceptance or avoidance behavior, depending on its substrates. In Drosophila melanogaster (Fruit fly), this protein is Putative gustatory receptor 59e (Gr59e).